Reading from the N-terminus, the 366-residue chain is MEDEDECPELVPIKEKPSGPTAQIPVTIITGYLGAGKTTLLNYILTEQHNKRIAVILNEFGEGSALEKSLAVSQAGELYEEWLELRNGCLCCSVKDNGLKAIENLMEKKGKFDYILLETTGLADPGAVASMFWVDAELGSDVYLDGIVTVIDAKYGLQHLTEEKPEGLINEAARQIALADLTIINKTDLVHETELLKLRDTVRSINALVKILETQKSRVDLSEVLDLHSFDTKDGERLTKKLQLVKTSQPHLDKSMLTITFEVPGSVSEDLLNIFIQELLWEKTFKNKAGLPMTVIRLKGILSLQQKQKKVMLQGVHELYELEETPEFWADQEPRLNRLVFIGRNLDGEILKKEFISAVSNKDSVE.

The psi-PxLVp motif motif lies at 5-12 (DECPELVP). 31–38 (GYLGAGKT) is a GTP binding site. Residues C89, C91, and C92 each contribute to the Zn(2+) site. Positions 89 to 92 (CLCC) match the CXCC motif motif. Residues 92-96 (CSVKD) and 185-188 (NKTD) each bind GTP. One can recognise a CobW C-terminal domain in the interval 258 to 357 (TITFEVPGSV…GEILKKEFIS (100 aa)).

Belongs to the SIMIBI class G3E GTPase family. ZNG1 subfamily.

The protein resides in the nucleus. The enzyme catalyses GTP + H2O = GDP + phosphate + H(+). Zinc chaperone that directly transfers zinc cofactor to target metalloproteins, thereby activating them. Catalyzes zinc insertion into the active site of methionine aminopeptidase METAP1, which function to cleave the initiator methionine from polypeptides during or after protein translation. Mechanistically, the N-terminal psi-PxLVp motif binds to the C6H2-type zinc finger of inactive form of METAP1. After formation of the docked complex, zinc is transferred from the CXCC motif in the GTPase domain of ZNG1 to the zinc binding site in the peptidase domain of METAP1 in a process requiring GTP hydrolysis. GTP/GDP exchange is required for release of active METAP1. The sequence is that of Zinc-regulated GTPase metalloprotein activator 1 from Danio rerio (Zebrafish).